The chain runs to 476 residues: Ribulose bisphosphate carboxylase large chain (476 aa).

A propeptide spanning residues 1-2 is cleaved from the precursor; it reads MS. Pro3 carries the N-acetylproline modification. Lys14 carries the N6,N6,N6-trimethyllysine modification. 2 residues coordinate substrate: Asn123 and Thr173. The active-site Proton acceptor is the Lys175. Lys177 is a binding site for substrate. Residues Lys201, Asp203, and Glu204 each coordinate Mg(2+). Lys201 is modified (N6-carboxylysine). The active-site Proton acceptor is His294. Residues Arg295, His327, and Ser379 each coordinate substrate.

This sequence belongs to the RuBisCO large chain family. Type I subfamily. In terms of assembly, heterohexadecamer of 8 large chains and 8 small chains; disulfide-linked. The disulfide link is formed within the large subunit homodimers. It depends on Mg(2+) as a cofactor. Post-translationally, the disulfide bond which can form in the large chain dimeric partners within the hexadecamer appears to be associated with oxidative stress and protein turnover.

The protein resides in the plastid. The protein localises to the chloroplast. The enzyme catalyses 2 (2R)-3-phosphoglycerate + 2 H(+) = D-ribulose 1,5-bisphosphate + CO2 + H2O. It carries out the reaction D-ribulose 1,5-bisphosphate + O2 = 2-phosphoglycolate + (2R)-3-phosphoglycerate + 2 H(+). RuBisCO catalyzes two reactions: the carboxylation of D-ribulose 1,5-bisphosphate, the primary event in carbon dioxide fixation, as well as the oxidative fragmentation of the pentose substrate in the photorespiration process. Both reactions occur simultaneously and in competition at the same active site. This Liriodendron tulipifera (Tuliptree) protein is Ribulose bisphosphate carboxylase large chain.